The chain runs to 344 residues: MQTLTIIRPDDMHLHLRDGDALKAVAPYTARQMGRAVIMPNLKPPVVSVADALAYKARIMAALPEGSAFEPLMTLYLTDQATPELVREAKAAGIVAFKLYPAGATTNSDSGVTDLFKLIPVLEEMAKQGILFLVHGEVTDPEIDIFDREAAFIGRVMKPVLAQVPNLKVVFEHITTAEAARLVLEAGDNVAASVTPQHLLLNRNDLLVGGVRPHHFCLPVLKRETHRQALVAAVTGEKAHKFFLGTDSAPHAKSAKENACGCAGMFSAMTAIELYAEVFEKAGALDKLEAFASENGARFYGIPENADTITLVKQSQTVPASVPYGDGELVPMRAGGEIGWTVQY.

Residues His13 and His15 each coordinate Zn(2+). Substrate contacts are provided by residues His15–Arg17 and Asn41. Residues Lys98, His135, and His173 each coordinate Zn(2+). N6-carboxylysine is present on Lys98. His135 provides a ligand contact to substrate. Leu218 is a substrate binding site. Asp247 provides a ligand contact to Zn(2+). Asp247 is an active-site residue. Substrate-binding residues include His251 and Ala263.

It belongs to the metallo-dependent hydrolases superfamily. DHOase family. Class II DHOase subfamily. In terms of assembly, homodimer. Requires Zn(2+) as cofactor.

The enzyme catalyses (S)-dihydroorotate + H2O = N-carbamoyl-L-aspartate + H(+). It participates in pyrimidine metabolism; UMP biosynthesis via de novo pathway; (S)-dihydroorotate from bicarbonate: step 3/3. Catalyzes the reversible cyclization of carbamoyl aspartate to dihydroorotate. The protein is Dihydroorotase of Neisseria gonorrhoeae (strain NCCP11945).